Here is a 227-residue protein sequence, read N- to C-terminus: PKHD-type hydroxylase NE2125 (227 aa).

The Fe2OG dioxygenase domain maps to 78 to 179; that stretch reads KIVPPFFNRY…RLACFMFIQS (102 aa). Positions 97, 99, and 160 each coordinate Fe cation. Arg170 is a binding site for 2-oxoglutarate.

Fe(2+) serves as cofactor. The cofactor is L-ascorbate.

In Nitrosomonas europaea (strain ATCC 19718 / CIP 103999 / KCTC 2705 / NBRC 14298), this protein is PKHD-type hydroxylase NE2125.